A 424-amino-acid chain; its full sequence is Multifunctional CCA protein (424 aa).

2 residues coordinate ATP: glycine 8 and arginine 11. Residues glycine 8 and arginine 11 each coordinate CTP. Residues aspartate 21 and aspartate 23 each contribute to the Mg(2+) site. 3 residues coordinate ATP: arginine 91, arginine 149, and arginine 152. Positions 91, 149, and 152 each coordinate CTP. Residues 238–339 form the HD domain; the sequence is TGIHLMMVLD…VRLLERCDAF (102 aa).

Belongs to the tRNA nucleotidyltransferase/poly(A) polymerase family. Bacterial CCA-adding enzyme type 1 subfamily. Monomer. Can also form homodimers and oligomers. Requires Mg(2+) as cofactor. The cofactor is Ni(2+).

The enzyme catalyses a tRNA precursor + 2 CTP + ATP = a tRNA with a 3' CCA end + 3 diphosphate. It catalyses the reaction a tRNA with a 3' CCA end + 2 CTP + ATP = a tRNA with a 3' CCACCA end + 3 diphosphate. In terms of biological role, catalyzes the addition and repair of the essential 3'-terminal CCA sequence in tRNAs without using a nucleic acid template. Adds these three nucleotides in the order of C, C, and A to the tRNA nucleotide-73, using CTP and ATP as substrates and producing inorganic pyrophosphate. tRNA 3'-terminal CCA addition is required both for tRNA processing and repair. Also involved in tRNA surveillance by mediating tandem CCA addition to generate a CCACCA at the 3' terminus of unstable tRNAs. While stable tRNAs receive only 3'-terminal CCA, unstable tRNAs are marked with CCACCA and rapidly degraded. In Polaromonas naphthalenivorans (strain CJ2), this protein is Multifunctional CCA protein.